A 262-amino-acid polypeptide reads, in one-letter code: MFEARLVQGSVLKRVLEALKDLITEACWDLGSGGISLQSMDSSHVSLVQLTLRSEGFDTYRCDRNIAMGVNLNSMSKILKCAGNEDIITLRAEDNADTLALVFETPNQEKVSDYEMKLMDLDVEQLGIPEQEYSCVVKMPSAEFARICRDLSHIGDAVVISCAKDGVKFSANGELGNGNIKLSQTSNVDKEEEAVTIEMNEPVQLTFALRYLNFFTKATPLSPTVTLSMSADVPLVVEYKIADMGHXKYYLAPKIEDQQEGS.

A DNA-binding region spans residues 61–80 (RCDRNIAMGVNLNSMSKILK). K164 is covalently cross-linked (Glycyl lysine isopeptide (Lys-Gly) (interchain with G-Cter in ubiquitin)).

This sequence belongs to the PCNA family. Homotrimer. Forms a complex with activator 1 heteropentamer in the presence of ATP. Component of the replisome complex. In terms of processing, monoubiquitinated by the UBE2B-RAD18 complex on Lys-164. Monoubiquitination at Lys-164 also takes place in undamaged proliferating cells, and is mediated by the DCX(DTL) complex, leading to enhance PCNA-dependent translesion DNA synthesis.

The protein resides in the nucleus. This protein is an auxiliary protein of DNA polymerase delta and is involved in the control of eukaryotic DNA replication by increasing the polymerase's processibility during elongation of the leading strand. The sequence is that of Proliferating cell nuclear antigen (PCNA) from Coturnix japonica (Japanese quail).